Here is a 406-residue protein sequence, read N- to C-terminus: uncharacterized protein (406 aa).

Belongs to the mycobacterial PPE family.

This is an uncharacterized protein from Mycobacterium tuberculosis (strain CDC 1551 / Oshkosh).